The primary structure comprises 556 residues: Acetyl-coenzyme A thioesterase (556 aa).

A HotDog ACOT-type 1 domain is found at 6-118 (APGEVLMSQA…FSTFVAKPVG (113 aa)). An N6-succinyllysine modification is found at Lys-34. Residues 54 to 56 (TAS) and 83 to 85 (STS) contribute to the CoA site. Position 97 is an N6-succinyllysine (Lys-97). A CoA-binding site is contributed by Arg-145. Lys-160 and Lys-229 each carry N6-succinyllysine. Residues 180–295 (MGTSVQSIEL…FLIYNAVDDQ (116 aa)) form the HotDog ACOT-type 2 domain. 235 to 237 (KFR) provides a ligand contact to CoA. The 210-residue stretch at 327–536 (GRKYVISHKK…GGWSKSIEEA (210 aa)) folds into the START domain.

As to quaternary structure, homodimer or homotetramer.

It localises to the cytoplasm. The protein localises to the cytosol. The enzyme catalyses acetyl-CoA + H2O = acetate + CoA + H(+). It carries out the reaction butanoyl-CoA + H2O = butanoate + CoA + H(+). The catalysed reaction is hexanoyl-CoA + H2O = hexanoate + CoA + H(+). It participates in lipid metabolism; fatty acid metabolism. Allosterically regulated by ATP (activator) and ADP (inhibitor). Cold labile, it dissociates into inactive monomers at low temperature. Its function is as follows. Catalyzes the hydrolysis of acyl-CoAs into free fatty acids and coenzyme A (CoASH), regulating their respective intracellular levels. Preferentially hydrolyzes acetyl-CoA. The polypeptide is Acetyl-coenzyme A thioesterase (Acot12) (Mus musculus (Mouse)).